Here is a 715-residue protein sequence, read N- to C-terminus: Interferon-induced GTP-binding protein Mx2 (715 aa).

A Dynamin-type G domain is found at 115 to 387 (DLALPAIAVI…LIMHIQKSLP (273 aa)). Residues 125-132 (GDQSSGKS) are G1 motif. 125-132 (GDQSSGKS) is a GTP binding site. Residues 150-152 (VTR) form a G2 motif region. Residues 225 to 228 (DLPG) form a G3 motif region. GTP is bound by residues 225 to 229 (DLPGI) and 294 to 297 (TKPD). Residues 294–297 (TKPD) are G4 motif. Residues 326–329 (KCRG) are G5 motif. One can recognise a GED domain in the interval 623–714 (FTEIGIHLNA…ALCQFSSKEI (92 aa)).

It belongs to the TRAFAC class dynamin-like GTPase superfamily. Dynamin/Fzo/YdjA family.

Its subcellular location is the cytoplasm. It localises to the nucleus. The protein localises to the nuclear pore complex. Interferon-induced dynamin-like GTPase with potent antiviral activity against human immunodeficiency virus type 1 (HIV-1). Acts by targeting the viral capsid and affects the nuclear uptake and/or stability of the HIV-1 replication complex and the subsequent chromosomal integration of the proviral DNA. Exhibits antiviral activity also against simian immunodeficiency virus (SIV-mnd). May play a role in regulating nucleocytoplasmic transport and cell-cycle progression. The polypeptide is Interferon-induced GTP-binding protein Mx2 (MX2) (Homo sapiens (Human)).